Here is a 466-residue protein sequence, read N- to C-terminus: Asparagine--tRNA ligase (466 aa).

The protein belongs to the class-II aminoacyl-tRNA synthetase family. As to quaternary structure, homodimer.

The protein localises to the cytoplasm. It catalyses the reaction tRNA(Asn) + L-asparagine + ATP = L-asparaginyl-tRNA(Asn) + AMP + diphosphate + H(+). The protein is Asparagine--tRNA ligase of Idiomarina loihiensis (strain ATCC BAA-735 / DSM 15497 / L2-TR).